The chain runs to 147 residues: Hemoglobin subunit beta-H1 (147 aa).

A Globin domain is found at 3–147 (HFTAEEKAAI…VANALSHKYH (145 aa)). 2 residues coordinate heme b: H64 and H93.

Belongs to the globin family. In terms of assembly, heterotetramer of two alpha chains and two beta chains. In terms of tissue distribution, red blood cells.

This is an embryonic beta-type chain. In Mus musculus (Mouse), this protein is Hemoglobin subunit beta-H1 (Hbb-bh1).